A 397-amino-acid chain; its full sequence is Tryptophan synthase beta chain (397 aa).

Lysine 87 is subject to N6-(pyridoxal phosphate)lysine.

The protein belongs to the TrpB family. Tetramer of two alpha and two beta chains. The cofactor is pyridoxal 5'-phosphate.

It catalyses the reaction (1S,2R)-1-C-(indol-3-yl)glycerol 3-phosphate + L-serine = D-glyceraldehyde 3-phosphate + L-tryptophan + H2O. The protein operates within amino-acid biosynthesis; L-tryptophan biosynthesis; L-tryptophan from chorismate: step 5/5. Functionally, the beta subunit is responsible for the synthesis of L-tryptophan from indole and L-serine. In Citrobacter koseri (strain ATCC BAA-895 / CDC 4225-83 / SGSC4696), this protein is Tryptophan synthase beta chain.